The chain runs to 268 residues: Tryptophan synthase alpha chain (268 aa).

Residues E49 and D60 each act as proton acceptor in the active site.

Belongs to the TrpA family. In terms of assembly, tetramer of two alpha and two beta chains.

The catalysed reaction is (1S,2R)-1-C-(indol-3-yl)glycerol 3-phosphate + L-serine = D-glyceraldehyde 3-phosphate + L-tryptophan + H2O. It functions in the pathway amino-acid biosynthesis; L-tryptophan biosynthesis; L-tryptophan from chorismate: step 5/5. The alpha subunit is responsible for the aldol cleavage of indoleglycerol phosphate to indole and glyceraldehyde 3-phosphate. This chain is Tryptophan synthase alpha chain, found in Yersinia pseudotuberculosis serotype O:1b (strain IP 31758).